The sequence spans 347 residues: MKSISNRDKLQDLLTQYYLNTNEKMVFLNSTGEVIALNEAAEEVFADDNDYSQMTNAVCRRCEGYSNEYDIMSCENCFLEALEIGKGSFQVFIRTKDNKIQPYTASYELIDHEKGIYAFTLHNVSPQIQRQERMYQRKMMQKTISAQENERKRISRELHDGIVQELINVDVELRLLKYQQDKDELIDNSKRIEGIMSRLIDDVRNLSVELRPSSLDDLGLDAAFRSYFKQFEKNYGIHVNYHTNFSAQRFDNEIETVVYRVVQEALFNALKYAQVDIVEVSLQLNENNIIAEVSDRGVGFKRGDDPKGTGLGLFGMNERAELVNGTVNIDSQINRGTIVTLEVPITD.

Positions 59, 62, 74, and 77 each coordinate [4Fe-4S] cluster. Positions 153–347 constitute a Histidine kinase domain; sequence RISRELHDGI…IVTLEVPITD (195 aa). Residue H159 is modified to Phosphohistidine; by autocatalysis.

Requires [4Fe-4S] cluster as cofactor. In terms of processing, autophosphorylated.

It localises to the cytoplasm. It catalyses the reaction ATP + protein L-histidine = ADP + protein N-phospho-L-histidine.. Activated by cysteine desulfurase, Fe(2+) ions and cysteine and inhibited by oxygen and ADP. Functionally, member of the two-component regulatory system NreB/NreC involved in the control of dissimilatory nitrate/nitrite reduction in response to oxygen. NreB functions as a direct oxygen sensor histidine kinase which is autophosphorylated, in the absence of oxygen, probably at the conserved histidine residue, and transfers its phosphate group probably to a conserved aspartate residue of NreC. NreB/NreC activates the expression of the nitrate (narGHJI) and nitrite (nir) reductase operons, as well as the putative nitrate transporter gene narT. This Staphylococcus carnosus (strain TM300) protein is Oxygen sensor histidine kinase NreB (nreB).